Consider the following 164-residue polypeptide: Putative 4-hydroxy-4-methyl-2-oxoglutarate aldolase (164 aa).

Residues 79–82 (GDRL) and Arg101 contribute to the substrate site. Asp102 contacts a divalent metal cation.

The protein belongs to the class II aldolase/RraA-like family. Homotrimer. It depends on a divalent metal cation as a cofactor.

The enzyme catalyses 4-hydroxy-4-methyl-2-oxoglutarate = 2 pyruvate. It carries out the reaction oxaloacetate + H(+) = pyruvate + CO2. Its function is as follows. Catalyzes the aldol cleavage of 4-hydroxy-4-methyl-2-oxoglutarate (HMG) into 2 molecules of pyruvate. Also contains a secondary oxaloacetate (OAA) decarboxylase activity due to the common pyruvate enolate transition state formed following C-C bond cleavage in the retro-aldol and decarboxylation reactions. This Halorhodospira halophila (strain DSM 244 / SL1) (Ectothiorhodospira halophila (strain DSM 244 / SL1)) protein is Putative 4-hydroxy-4-methyl-2-oxoglutarate aldolase.